The following is a 786-amino-acid chain: Cyclin-F (786 aa).

Positions 20–28 match the Nuclear localization signal 1 motif; sequence KRRIRRRPR. Residues 29–76 form the F-box domain; it reads NLTILSLPEDVLFHILKWLSVEDILAVRAVHSQLKDLVDNHASVWACA. Residues 288–405 enclose the Cyclin N-terminal domain; the sequence is QASQAVSKQQ…EIVSALEGKI (118 aa). 4 short sequence motifs (d box) span residues 310–313, 343–346, 349–352, and 351–354; these read RYIL, RRRL, RYRL, and RLQL. 2 disordered regions span residues 564 to 593 and 675 to 738; these read SPSG…TAEL and TQIP…HTQP. A Nuclear localization signal 2 motif is present at residues 568 to 574; it reads RRTKRKR. The interval 582–766 is PEST; sequence RGSFVTTPTA…ESSVPQQQVK (185 aa). Residues 697-714 are compositionally biased toward low complexity; it reads VTTSGYSSVSTASPTSSV. Residues 723-738 show a composition bias toward polar residues; the sequence is QPTSVLSLDSDSHTQP. Positions 767–770 match the D box 5 motif; it reads RINL.

It belongs to the cyclin family. Cyclin AB subfamily. Component of the SCF(CCNF) complex consisting of CUL1, RBX1, SKP1 and CCNF. Interacts with SKP1. Interacts with CUL1. Interacts with CCNB1; interaction is required for nuclear localization of CCNB1. Interacts with CCP110; this interaction leads to CCP110 ubiquitination and degradation via the proteasome pathway. Interacts (via the Cyclin N-terminal domain) with MYBL2/BMYB. Interacts with FZR1/CDH1 (via N-terminus). Interacts with RRM2 (via Cy motif and when phosphorylated at 'Thr-33'); the interaction occurs exclusively in G2 and early M. Interacts with CDC6 (via Cy motif); the interaction takes place during G2 and M phase. Post-translationally, degraded when the spindle assembly checkpoint is activated during the G2-M transition. Degradation depends on the C-terminal PEST sequence. Phosphorylated just before cells enter into mitosis. In terms of processing, ubiquitinated by the anaphase-promoting complex (APC/C); leading to its degradation by the proteasome. As to expression, widely expressed, with expression detected in the heart, brain, placenta, lung, liver, skeletal muscle, kidney and pancreas.

It localises to the nucleus. The protein localises to the cytoplasm. Its subcellular location is the perinuclear region. The protein resides in the cytoskeleton. It is found in the microtubule organizing center. It localises to the centrosome. The protein localises to the centriole. Functionally, substrate recognition component of a SCF (SKP1-CUL1-F-box protein) E3 ubiquitin-protein ligase complex which mediates the ubiquitination and subsequent proteasomal degradation of target proteins. The SCF(CCNF) E3 ubiquitin-protein ligase complex is an integral component of the ubiquitin proteasome system (UPS) and links proteasome degradation to the cell cycle. Mediates the substrate recognition and the proteasomal degradation of various target proteins involved in the regulation of cell cycle progression and in the maintenance of genome stability. Mediates the ubiquitination and proteasomal degradation of CP110 during G2 phase, thereby acting as an inhibitor of centrosome reduplication. In G2, mediates the ubiquitination and subsequent degradation of ribonucleotide reductase RRM2, thereby maintaining a balanced pool of dNTPs and genome integrity. In G2, mediates the ubiquitination and proteasomal degradation of CDC6, thereby suppressing DNA re-replication and preventing genome instability. Involved in the ubiquitination and degradation of the substrate adapter CDH1 of the anaphase-promoting complex (APC/C), thereby acting as an antagonist of APC/C in regulating G1 progression and S phase entry. May play a role in the G2 cell cycle checkpoint control after DNA damage, possibly by promoting the ubiquitination of MYBL2/BMYB. The sequence is that of Cyclin-F (CCNF) from Homo sapiens (Human).